The following is a 179-amino-acid chain: Large ribosomal subunit protein uL5 (179 aa).

It belongs to the universal ribosomal protein uL5 family. In terms of assembly, part of the 50S ribosomal subunit; part of the 5S rRNA/L5/L18/L25 subcomplex. Contacts the 5S rRNA and the P site tRNA. Forms a bridge to the 30S subunit in the 70S ribosome.

In terms of biological role, this is one of the proteins that bind and probably mediate the attachment of the 5S RNA into the large ribosomal subunit, where it forms part of the central protuberance. In the 70S ribosome it contacts protein S13 of the 30S subunit (bridge B1b), connecting the 2 subunits; this bridge is implicated in subunit movement. Contacts the P site tRNA; the 5S rRNA and some of its associated proteins might help stabilize positioning of ribosome-bound tRNAs. This Alcanivorax borkumensis (strain ATCC 700651 / DSM 11573 / NCIMB 13689 / SK2) protein is Large ribosomal subunit protein uL5.